Reading from the N-terminus, the 900-residue chain is Endoglucanase H (900 aa).

The signal sequence occupies residues 1-44; the sequence is MKKRLLVSFLVLSIIVGLLSFQSLGNYNSGLKIGAWVGTQPSES. Positions 45-298 constitute a GH26 domain; that stretch reads AIKSFQELQG…NSSPEALAAY (254 aa). Catalysis depends on Glu131, which acts as the Proton donor. The active-site Nucleophile is the Glu244. The segment at 300–630 is catalytic; it reads EAIGAGSSNP…DTEILNALFN (331 aa). The tract at residues 303–326 is disordered; it reads GAGSSNPTPTPTWTSTPPSSSPKA. The segment covering 306–324 has biased composition (low complexity); that stretch reads SSNPTPTPTWTSTPPSSSP. The active-site Proton donor is the Glu460. Glu565 serves as the catalytic Nucleophile. The 246-residue stretch at 655–900 folds into the CBM11 domain; sequence AVGEKMLDDF…LLKAISEIPI (246 aa). The region spanning 827 to 900 is the Dockerin domain; that stretch reads PSIKHGDLNF…LLKAISEIPI (74 aa).

This sequence in the N-terminal section; belongs to the glycosyl hydrolase 5 (cellulase A) family. The protein in the C-terminal section; belongs to the glycosyl hydrolase 26 family.

The catalysed reaction is Endohydrolysis of (1-&gt;4)-beta-D-glucosidic linkages in cellulose, lichenin and cereal beta-D-glucans.. This enzyme catalyzes the endohydrolysis of 1,4-beta-glucosidic linkages in cellulose, lichenin and cereal beta-D-glucans. The polypeptide is Endoglucanase H (celH) (Acetivibrio thermocellus (strain ATCC 27405 / DSM 1237 / JCM 9322 / NBRC 103400 / NCIMB 10682 / NRRL B-4536 / VPI 7372) (Clostridium thermocellum)).